Reading from the N-terminus, the 263-residue chain is Methylesterase 2 (263 aa).

The Acyl-ester intermediate role is filled by serine 85. Active-site charge relay system residues include aspartate 213 and histidine 241.

This sequence belongs to the AB hydrolase superfamily. Methylesterase family.

It catalyses the reaction methyl (indol-3-yl)acetate + H2O = (indol-3-yl)acetate + methanol + H(+). The catalysed reaction is methyl (-)-jasmonate + H2O = jasmonate + methanol + H(+). It carries out the reaction methyl salicylate + H2O = salicylate + methanol + H(+). Its pathway is plant hormone biosynthesis. The protein operates within lipid metabolism; oxylipin biosynthesis. Its activity is regulated as follows. Esterase activity is down-regulated by salicylic acid (SA). Down-regulated by agrochemicals Paraoxon, 3,4-DCl and Profenofos. Methylesterase shown to have carboxylesterase activity, methyl indole-3-acetic acid (MeIAA) esterase activity, methyl salicylate (MeSA) esterase activity and methyl jasmonate (MeJA) esterase activity in vitro. The protein is Methylesterase 2 of Arabidopsis thaliana (Mouse-ear cress).